Reading from the N-terminus, the 720-residue chain is Polyribonucleotide nucleotidyltransferase (720 aa).

Mg(2+) contacts are provided by Asp487 and Asp493. The KH domain maps to 554-613; the sequence is PRIETFKIPTDKIREVIGTGGKVIREIVEKTGAKINIEDDGTVKVASNDGEAMKAAIKWI. Positions 623–691 constitute an S1 motif domain; it reads GQIYEGTVVK…DRGKTRLSMK (69 aa). A disordered region spans residues 691–720; the sequence is KAVDQQTGEDLEAAGHKAEKADAPREAAGE. Basic and acidic residues predominate over residues 703–720; that stretch reads AAGHKAEKADAPREAAGE.

This sequence belongs to the polyribonucleotide nucleotidyltransferase family. It depends on Mg(2+) as a cofactor.

It localises to the cytoplasm. It catalyses the reaction RNA(n+1) + phosphate = RNA(n) + a ribonucleoside 5'-diphosphate. In terms of biological role, involved in mRNA degradation. Catalyzes the phosphorolysis of single-stranded polyribonucleotides processively in the 3'- to 5'-direction. The sequence is that of Polyribonucleotide nucleotidyltransferase from Nitrobacter hamburgensis (strain DSM 10229 / NCIMB 13809 / X14).